The chain runs to 1507 residues: MSTSVQRMSRSYHCINMSATPQAGHLNPAQQQTHQQHKRKCRDLGRRLIPARLLLGVIVAISLLSPALALHSPPDKNFSGDNRKPAFKNCAGYAPKVKEEQPENTYVLTVEAVDPDPDQVIRYSIVQSPFERPKFFINPSTGVIFTTHTFDRDEPIHEKFVFVTVQATDNGLPPLDDVCTFNVTIEDINDNAPAFNKARYDESMSENAQPDAVVMTISASDFDDGNNSLVEYEILRERDFQYFKIDKESGIIYLKRPIDKRPGQSYAIIVRAYNVVPDPPQDAQIEVRIRVVESSIKPPSFVNPIDTPIYLKENLKNFTHPIATLRAVSNMPDKPEVIFELNTGRTEQTNSKNTFVFNQIGNEVTISLGKTLDYEAITDYTLTMIVRNTHELGTEHQIKIQVEDVNDNIPYYTEVKSGTILENEPPGTPVMQVRAFDMDGTSANNIVSFELADNREYFTIDPNTGNITALTTFDREERDFYNVKVIASDNSPSSLFDNGEPNRGHQVFRISIGDKNDHKPHFQQDKYLAERLLEDANTNTEVIEVKAEDEDNASQILYSIESGNVGDAFKIGLKTGKITVNQKLDYETITEYELKVRAFDGIYDDYTTVVIKIEDVNDNPPVFKQDYSVTILEETTYDDCILTVEAYDPDIKDRNADQHIVYSIHQNDGNRWTIDNSGCLRLVKTLDRDPPNGHKNWQVLIKANDEDGVGTTVSTVKEVTVTLKDINDNAPFLINEMPVYWQENRNPGHVVQLQANDYDDTPGAGNFTFGIDSEATPDIKTKFSMDGDYLHANVQFDREAQKEYFIPIRISDSGVPRQSAVSILHLVIGDVNDNAMSEGSSRIFIYNYKGEAPETDIGRVFVDDLDDWDLEDKYFEWKDLPHDQFRLNPSTGMITMLVHTAEGEYDLSFVVTEDSMFVPRHSVDAYVTVVVRELPEEAVDKSGSIRFINVTKEEFISVPRDFQSPDALSLKDRLQLSLAKLFNTSVSNVDVFTVLQNENHTLDVRFSAHGSPYYAPEKLNGIVAQNQQRLENELDLQMLMVNIDECLIEKFKCEESCTNELHKSSVPYMIYSNTTSFVGVNAFVQAQCVCEAPLMRRCLNGGSPRYGENDVCDCIDGFTGPHCELVSVAFYGSGYAFYEPIAACNNTKISLEITPQIDQGLIMYLGPLNFNPLLAISDFLALELDNGYPVLTVDYGSGAIRIRHQHIKMVADRTYQLDIILQRTSIEMTVDNCRLSTCQTLGAPIGPNEFLNVNAPLQLGGTPVDLEQLGRQLNWTHVPNQKGFFGCIRNLTINEQTYNLGMPSVFRNIDSGCQQSVAVAFSFGIDRNFIIAIIVCLALLLIILLAVVVQKKQKNGWHEKDIDDIRETIINYEDEGGGERDTDYDLNVLRTQPFYEEKLYKDPHALQGNMRDPNDIPDIADFLGDKKENCDRDVGATTVDDVRHYAYEGDGNSDGSLSSLASCTDDGDLNFDYLSNFGPRFRKLADMYGEEPSDTDSNVDDDQGWRI.

The first 69 residues, Met-1 to Ala-69, serve as a signal peptide directing secretion. The propeptide occupies Leu-70–Arg-261. Cadherin domains lie at Val-97–Phe-195, Met-204–Phe-301, Leu-311–Tyr-412, Ile-420–Phe-522, Leu-532–Glu-633, Ile-631–Leu-733, and Trp-741–Ala-835. Residues Pro-262–Asn-1328 lie on the Extracellular side of the membrane. N-linked (GlcNAc...) asparagine glycosylation is found at Asn-317, Asn-466, and Asn-552. Residues Asn-766, Asn-949, Asn-983, Asn-999, and Asn-1073 are each glycosylated (N-linked (GlcNAc...) asparagine). The region spanning Val-1084–Cys-1123 is the EGF-like domain. 2 disulfide bridges follow: Cys-1098–Cys-1112 and Cys-1114–Cys-1123. The region spanning Leu-1125–Cys-1313 is the Laminin G-like domain. Residues Asn-1145, Asn-1274, and Asn-1290 are each glycosylated (N-linked (GlcNAc...) asparagine). An intrachain disulfide couples Cys-1287 to Cys-1313. Residues Phe-1329–Val-1349 traverse the membrane as a helical segment. Topologically, residues Gln-1350–Ile-1507 are cytoplasmic. Positions Gln-1350–Ile-1507 are interaction with Inx2. Residues Tyr-1488 to Ile-1507 are disordered. The residue at position 1493 (Ser-1493) is a Phosphoserine.

Interacts (via cytoplasmic region) with Inx2 (via cytoplasmic loop). Interacts with Hakai. Interacts with Myo31DF. In terms of processing, N-glycosylation is important for biosynthesis and function. As to expression, in early stage 9 and stage 10 oocytes, expressed in border cells, strongly expressed in polar cells and very weakly expressed in the nurse cells (at protein level). In the embryo, expressed in the leading edge cells of the dorsal epidermis (at protein level). Stage 10 embryos exhibit intense expression in epithelial cells. Stage 14 embryos show expression in the hindgut (at the apical poles of cell-cell boundaries), at the apical junctions of tracheal cells and in the dorsal longitudinal trunk. In stage 16 embryos the glial midline cells of the central nervous system show strong expression.

Its subcellular location is the cell membrane. It localises to the apical cell membrane. Cadherins are calcium-dependent cell adhesion proteins. In connecting cells they preferentially interact with themselves in a homophilic manner; cadherins may thus contribute to the sorting of heterogeneous cell types. During oogenesis, integral component of the guidance mechanisms that regulate the directional persistent collective migration of the border cell (BC) cluster through the nurse cells to the oocyte. Functions downstream of the two chemoattractant receptors, Pvr and Egfr, to promote BC adhesion between the leader cells of the migrating cluster and the surrounding nurse cells. This adhesion increases Rac1 signaling in the leading cells, which in turn stabilizes DE-cadherin/DE-cadherin adhesions through the formation of forward-directed protrusions which attach/detach to the surrounding nurse cells in order to pull the cluster through the egg chamber to the oocyte. Within the BC cluster, also promotes adhesion between BCs, and between BCs and polar cells which enables the lead BC to communicate direction to the other cells in the cluster, providing polarity to each individual cell and ensuring collective behavior. May function in cell intercalation in the lateral epidermis during germband extension. Contributes to the determination of body left-right asymmetry by enhancing Myo31DF activity and inhibiting Myo61F activity. The protein is DE-cadherin of Drosophila melanogaster (Fruit fly).